A 158-amino-acid polypeptide reads, in one-letter code: 6,7-dimethyl-8-ribityllumazine synthase (158 aa).

5-amino-6-(D-ribitylamino)uracil-binding positions include Phe-22, 57–59 (AVE), and 81–83 (AVI). 86–87 (GT) serves as a coordination point for (2S)-2-hydroxy-3-oxobutyl phosphate. The Proton donor role is filled by His-89. Phe-114 contacts 5-amino-6-(D-ribitylamino)uracil. Arg-128 provides a ligand contact to (2S)-2-hydroxy-3-oxobutyl phosphate.

It belongs to the DMRL synthase family. In terms of assembly, forms an icosahedral capsid composed of 60 subunits, arranged as a dodecamer of pentamers.

It catalyses the reaction (2S)-2-hydroxy-3-oxobutyl phosphate + 5-amino-6-(D-ribitylamino)uracil = 6,7-dimethyl-8-(1-D-ribityl)lumazine + phosphate + 2 H2O + H(+). It functions in the pathway cofactor biosynthesis; riboflavin biosynthesis; riboflavin from 2-hydroxy-3-oxobutyl phosphate and 5-amino-6-(D-ribitylamino)uracil: step 1/2. Its function is as follows. Catalyzes the formation of 6,7-dimethyl-8-ribityllumazine by condensation of 5-amino-6-(D-ribitylamino)uracil with 3,4-dihydroxy-2-butanone 4-phosphate. This is the penultimate step in the biosynthesis of riboflavin. The sequence is that of 6,7-dimethyl-8-ribityllumazine synthase from Shewanella putrefaciens (strain CN-32 / ATCC BAA-453).